The chain runs to 546 residues: Acyl-CoA ligase oryP (546 aa).

Residues 166–174 (TSGTTGAPK), 300–305 (QFWLNL), and Arg-403 each bind ATP. CoA contacts are provided by residues 412–414 (WDH) and 482–484 (LLR). Lys-499 is a binding site for ATP.

The protein belongs to the ATP-dependent AMP-binding enzyme family.

It functions in the pathway secondary metabolite biosynthesis. Functionally, acyl-CoA ligase; part of the gene cluster that mediates the biosynthesis of oryzines, natural products with an unusual maleidride backbone. The two subunits of the fungal fatty acid synthase oryfasA and oryfasB probably form octenoic acid. This fatty acid is most likely activated by the acyl-CoA ligase oryP to give octenyl-CoA before the citrate synthase-like protein oryE catalyzes condensation with oxaloacetate to form tricarboxylic acid. The next steps of the pathways are conjectural, but a favorite possible route has been proposed, beginning with decarboxylation and concomitant dehydration by the decarboxylase oryM, followed by tautomerization, which may lead to the production of a diene intermediate. Reduction of this diene intermediate could give the known metabolite piliformic acid. On the pathway to oryzine B and oryzine A, however, hydroxylation of the diene by the alpha-ketoglutarate-dependent dioxygenase oryG and lactonisation by the lactonohydrolases oryH or oryL could give oryzine B directly. Finally, enoyl reduction by the dehydrogenase oryD would then convert oryzine B into oryzine A. This chain is Acyl-CoA ligase oryP, found in Aspergillus oryzae (strain ATCC 42149 / RIB 40) (Yellow koji mold).